The chain runs to 482 residues: Bifunctional protein HldE (482 aa).

The segment at 1–322 (MFGLESKSPK…QYIHTQPSNL (322 aa)) is ribokinase. Residue 198-201 (NKKE) coordinates ATP. Residue aspartate 267 is part of the active site. Positions 350–482 (FTNGCFDILH…IQRSKICKHS (133 aa)) are cytidylyltransferase.

It in the N-terminal section; belongs to the carbohydrate kinase PfkB family. In the C-terminal section; belongs to the cytidylyltransferase family. As to quaternary structure, homodimer.

It catalyses the reaction D-glycero-beta-D-manno-heptose 7-phosphate + ATP = D-glycero-beta-D-manno-heptose 1,7-bisphosphate + ADP + H(+). The enzyme catalyses D-glycero-beta-D-manno-heptose 1-phosphate + ATP + H(+) = ADP-D-glycero-beta-D-manno-heptose + diphosphate. Its pathway is nucleotide-sugar biosynthesis; ADP-L-glycero-beta-D-manno-heptose biosynthesis; ADP-L-glycero-beta-D-manno-heptose from D-glycero-beta-D-manno-heptose 7-phosphate: step 1/4. The protein operates within nucleotide-sugar biosynthesis; ADP-L-glycero-beta-D-manno-heptose biosynthesis; ADP-L-glycero-beta-D-manno-heptose from D-glycero-beta-D-manno-heptose 7-phosphate: step 3/4. It functions in the pathway bacterial outer membrane biogenesis; LPS core biosynthesis. Its function is as follows. Catalyzes the phosphorylation of D-glycero-D-manno-heptose 7-phosphate at the C-1 position to selectively form D-glycero-beta-D-manno-heptose-1,7-bisphosphate. Functionally, catalyzes the ADP transfer from ATP to D-glycero-beta-D-manno-heptose 1-phosphate, yielding ADP-D-glycero-beta-D-manno-heptose. This chain is Bifunctional protein HldE, found in Helicobacter hepaticus (strain ATCC 51449 / 3B1).